Reading from the N-terminus, the 252-residue chain is MKNEIAAVVFFFTRLVRKHDKLKKEAVERFAEKLTLILQEKYKNHWYPEKPSKGQAYRCIRVNKFQRVDPDVLKACENSCILYSDLGLPKELTLWVDPCEVCCRYGEKNNAFIVASFENEEENKDEISKKVTRALDKVTSDYHSGSSSSDEETSKEVEVKPNSVTATPSPVYQISELIFPPLPMWHPLPRKKPGMYRGNGHQNHYPPPVPFGYPNQGRKNKPYRPIPVTWVPPPGMHCDRNHWINPHMLAPH.

The interval 138–165 is disordered; sequence VTSDYHSGSSSSDEETSKEVEVKPNSVT.

Belongs to the BTG family.

In terms of biological role, overexpression impairs serum-induced cell cycle progression from the G0/G1 to S phase. This Sus scrofa (Pig) protein is Protein BTG3 (BTG3).